The following is a 361-amino-acid chain: Alanine racemase (361 aa).

The Proton acceptor; specific for D-alanine role is filled by K34. The residue at position 34 (K34) is an N6-(pyridoxal phosphate)lysine. R129 is a binding site for substrate. Y256 acts as the Proton acceptor; specific for L-alanine in catalysis. M304 lines the substrate pocket.

Belongs to the alanine racemase family. Pyridoxal 5'-phosphate is required as a cofactor.

It catalyses the reaction L-alanine = D-alanine. It functions in the pathway amino-acid biosynthesis; D-alanine biosynthesis; D-alanine from L-alanine: step 1/1. Catalyzes the interconversion of L-alanine and D-alanine. May also act on other amino acids. The chain is Alanine racemase (alr) from Corynebacterium glutamicum (strain R).